The chain runs to 480 residues: Beta-amyrin 28-monooxygenase (480 aa).

A helical membrane pass occupies residues 3-23; that stretch reads VFFLSLLLICVLSVSIRLYLL. C427 is a heme binding site.

The protein belongs to the cytochrome P450 family. The cofactor is heme. Expressed in leaves, stems and fruit skin.

The protein localises to the membrane. It catalyses the reaction beta-amyrin + 3 reduced [NADPH--hemoprotein reductase] + 3 O2 = oleanolate + 3 oxidized [NADPH--hemoprotein reductase] + 4 H2O + 4 H(+). In terms of biological role, catalyzes the carboxylation of beta-amyrin at the C-28 position to form oleanolic acid. May be involved in saponin biosynthesis in fruit skin. The sequence is that of Beta-amyrin 28-monooxygenase from Vitis vinifera (Grape).